The following is a 171-amino-acid chain: Histone H1, gonadal (171 aa).

2 disordered regions span residues 1-40 and 133-171; these read AASP…AHPP and AKAK…KAKP. Residues 9–35 show a composition bias toward basic residues; the sequence is ASPRKSPKKSPRKSPKKKSPRKRKARS. In terms of domain architecture, H15 spans 37 to 111; the sequence is AHPPVIDMIT…GATGRFRVGA (75 aa).

This sequence belongs to the histone H1/H5 family. In terms of tissue distribution, sperm.

The protein resides in the nucleus. It localises to the chromosome. Histones H1 are necessary for the condensation of nucleosome chains into higher-order structures. The polypeptide is Histone H1, gonadal (Echinolampas crassa (Sea urchin)).